The primary structure comprises 700 residues: uncharacterized protein (700 aa).

The next 9 membrane-spanning stretches (helical) occupy residues 24 to 44, 67 to 87, 89 to 109, 115 to 135, 139 to 159, 383 to 403, 420 to 440, 461 to 481, and 491 to 511; these read VLCL…GLLF, LIIG…LLAK, VPLP…AELG, LLPA…YMPV, LLIY…WFWI, LMGT…VLLV, VGTV…IPEG, YGWA…LLWL, and LIDT…LWPQ.

It belongs to the YccS/YhfK family.

Its subcellular location is the cell membrane. This is an uncharacterized protein from Escherichia coli (strain K12).